The chain runs to 186 residues: Transcriptional repressor NrdR (186 aa).

A zinc finger spans residues 3–34 (CPFCRHPDSRVVDSREAEEGAAIRRRRSCPAC). Residues 46–136 (LRVRKRSGAT…VYLAFESLGD (91 aa)) enclose the ATP-cone domain. The tract at residues 149 to 169 (AGGGEPPVAGKPTTMPAATGA) is disordered.

It belongs to the NrdR family. The cofactor is Zn(2+).

Functionally, negatively regulates transcription of bacterial ribonucleotide reductase nrd genes and operons by binding to NrdR-boxes. In Parafrankia sp. (strain EAN1pec), this protein is Transcriptional repressor NrdR.